A 265-amino-acid chain; its full sequence is Ubiquinone biosynthesis protein COQ4 homolog, mitochondrial (265 aa).

The N-terminal 30 residues, 1 to 30, are a transit peptide targeting the mitochondrion; the sequence is MMQRSWQSWRRGLTLGLASRRSYVASVEAP. Zn(2+)-binding residues include His170, Asp171, His174, and Glu186.

The protein belongs to the COQ4 family. As to quaternary structure, component of a multi-subunit COQ enzyme complex. Zn(2+) serves as cofactor.

It localises to the mitochondrion inner membrane. The catalysed reaction is a 4-hydroxy-3-methoxy-5-(all-trans-polyprenyl)benzoate + H(+) = a 2-methoxy-6-(all-trans-polyprenyl)phenol + CO2. Its pathway is cofactor biosynthesis; ubiquinone biosynthesis. Lyase that catalyzes the C1-decarboxylation of 4-hydroxy-3-methoxy-5-(all-trans-polyprenyl)benzoic acid into 2-methoxy-6-(all-trans-polyprenyl)phenol during ubiquinone biosynthesis. The sequence is that of Ubiquinone biosynthesis protein COQ4 homolog, mitochondrial from Drosophila virilis (Fruit fly).